The chain runs to 480 residues: Ribulose bisphosphate carboxylase large chain (480 aa).

Positions Met-1 to Ser-2 are excised as a propeptide. Pro-3 carries the post-translational modification N-acetylproline. At Lys-14 the chain carries N6,N6,N6-trimethyllysine. 2 residues coordinate substrate: Asn-123 and Thr-173. The active-site Proton acceptor is the Lys-175. Lys-177 provides a ligand contact to substrate. The Mg(2+) site is built by Lys-201, Asp-203, and Glu-204. N6-carboxylysine is present on Lys-201. His-294 functions as the Proton acceptor in the catalytic mechanism. Arg-295, His-327, and Ser-379 together coordinate substrate.

It belongs to the RuBisCO large chain family. Type I subfamily. Heterohexadecamer of 8 large chains and 8 small chains; disulfide-linked. The disulfide link is formed within the large subunit homodimers. The cofactor is Mg(2+). Post-translationally, the disulfide bond which can form in the large chain dimeric partners within the hexadecamer appears to be associated with oxidative stress and protein turnover.

The protein resides in the plastid. It localises to the chloroplast. The enzyme catalyses 2 (2R)-3-phosphoglycerate + 2 H(+) = D-ribulose 1,5-bisphosphate + CO2 + H2O. The catalysed reaction is D-ribulose 1,5-bisphosphate + O2 = 2-phosphoglycolate + (2R)-3-phosphoglycerate + 2 H(+). In terms of biological role, ruBisCO catalyzes two reactions: the carboxylation of D-ribulose 1,5-bisphosphate, the primary event in carbon dioxide fixation, as well as the oxidative fragmentation of the pentose substrate in the photorespiration process. Both reactions occur simultaneously and in competition at the same active site. This Alluaudia procera (Madagascan ocotillo) protein is Ribulose bisphosphate carboxylase large chain.